A 178-amino-acid chain; its full sequence is CRISPR system ring nuclease SSO2081 (178 aa).

The transition state stabilizer stretch occupies residues 105–106; sequence RK.

It belongs to the cOA ring nuclease family. As to quaternary structure, homodimer. The cofactor is Does not require a metal cofactor..

The protein localises to the cytoplasm. The catalysed reaction is cyclic tetraadenylate = 2 5'-hydroxy-diadenylate 2',3'-cylic phosphate. In terms of biological role, CRISPR (clustered regularly interspaced short palindromic repeat) is an adaptive immune system that provides protection against mobile genetic elements (viruses, transposable elements and conjugative plasmids). CRISPR clusters contain spacers, sequences complementary to antecedent mobile elements, and target invading nucleic acids. CRISPR clusters are transcribed and processed into CRISPR RNA (crRNA). A nuclease that degrades cyclic oligoadenylates (cOA), second messengers that induce an antiviral state important for defense against invading nucleic acids. Destruction of cOA deactivates the Csx1 ribonuclease, preventing uncontrolled degradation of cellular RNA. Degrades cA4 (a tetraadenylate ring) into a linear diadenylate product with 5'-OH and 2',3'-cyclic phosphate termini. Is 10-fold more active than SSO1393, suggesting this is the major cA4 degradation enzyme. Is highly specific for cA4; it has very poor activity on cA6 and no discernible activity against a number of cyclic dinucleotides. There may be 2 active sites per homodimer. The protein is CRISPR system ring nuclease SSO2081 of Saccharolobus solfataricus (strain ATCC 35092 / DSM 1617 / JCM 11322 / P2) (Sulfolobus solfataricus).